A 255-amino-acid chain; its full sequence is Small ribosomal subunit protein uS2 (255 aa).

Positions 230 to 255 are disordered; that stretch reads QSSSGRDLGASSEVPVEPALEEAAEG.

It belongs to the universal ribosomal protein uS2 family.

This chain is Small ribosomal subunit protein uS2, found in Rhizobium leguminosarum bv. trifolii (strain WSM2304).